Reading from the N-terminus, the 111-residue chain is Large ribosomal subunit protein uL22 (111 aa).

The protein belongs to the universal ribosomal protein uL22 family. As to quaternary structure, part of the 50S ribosomal subunit.

This protein binds specifically to 23S rRNA; its binding is stimulated by other ribosomal proteins, e.g. L4, L17, and L20. It is important during the early stages of 50S assembly. It makes multiple contacts with different domains of the 23S rRNA in the assembled 50S subunit and ribosome. Its function is as follows. The globular domain of the protein is located near the polypeptide exit tunnel on the outside of the subunit, while an extended beta-hairpin is found that lines the wall of the exit tunnel in the center of the 70S ribosome. This is Large ribosomal subunit protein uL22 from Clostridium kluyveri (strain NBRC 12016).